Consider the following 174-residue polypeptide: ATP-dependent protease subunit HslV (174 aa).

Residue threonine 2 is part of the active site. Residues alanine 156, cysteine 159, and threonine 162 each coordinate Na(+).

Belongs to the peptidase T1B family. HslV subfamily. As to quaternary structure, a double ring-shaped homohexamer of HslV is capped on each side by a ring-shaped HslU homohexamer. The assembly of the HslU/HslV complex is dependent on binding of ATP.

The protein resides in the cytoplasm. It catalyses the reaction ATP-dependent cleavage of peptide bonds with broad specificity.. Its activity is regulated as follows. Allosterically activated by HslU binding. Protease subunit of a proteasome-like degradation complex believed to be a general protein degrading machinery. This Agrobacterium fabrum (strain C58 / ATCC 33970) (Agrobacterium tumefaciens (strain C58)) protein is ATP-dependent protease subunit HslV.